Here is a 408-residue protein sequence, read N- to C-terminus: Protein trichome birefringence-like 14 (408 aa).

A helical; Signal-anchor for type II membrane protein membrane pass occupies residues 11–31 (GSVSLALIVLILLVIILLVSE). The short motif at 131-133 (GDS) is the GDS motif element. Residues 387-401 (DCLHWCLPGIPDTWN) carry the DCXHWCLPGXXDXWN motif motif.

The protein belongs to the PC-esterase family. TBL subfamily.

The protein resides in the membrane. Its function is as follows. May act as a bridging protein that binds pectin and other cell wall polysaccharides. Probably involved in maintaining esterification of pectins. May be involved in the specific O-acetylation of cell wall polymers. The chain is Protein trichome birefringence-like 14 (TBL14) from Arabidopsis thaliana (Mouse-ear cress).